Reading from the N-terminus, the 399-residue chain is Probable F-box protein At4g22060 (399 aa).

The F-box domain occupies 12-48; sequence SWSKLPLDLLIMVFERLGFVDFQRTKSVCLAWLYASR.

The protein is Probable F-box protein At4g22060 of Arabidopsis thaliana (Mouse-ear cress).